The sequence spans 369 residues: Ferrochelatase (369 aa).

Residues His-210 and Glu-291 each contribute to the Fe cation site.

The protein belongs to the ferrochelatase family.

The protein localises to the cytoplasm. The enzyme catalyses heme b + 2 H(+) = protoporphyrin IX + Fe(2+). It participates in porphyrin-containing compound metabolism; protoheme biosynthesis; protoheme from protoporphyrin-IX: step 1/1. In terms of biological role, catalyzes the ferrous insertion into protoporphyrin IX. The protein is Ferrochelatase of Thioalkalivibrio sulfidiphilus (strain HL-EbGR7).